Reading from the N-terminus, the 500-residue chain is Putative beta-lactamase-like 1 (500 aa).

The protein belongs to the beta-lactamase family.

The sequence is that of Putative beta-lactamase-like 1 (LACTBL1) from Homo sapiens (Human).